Here is a 370-residue protein sequence, read N- to C-terminus: MSNQHILLMSNLLPVGSNISTWWNFGSMLLTCLLLQIMTGFFLAIHYTANINLAFSSVVHILRDVPYGWIMQNIHAIGASLFFICIYIHIARGLYYGLYLNKEVWLSGTALLITLMATAFFGYVLPWGQMSFLAATVITNLLTAIPYLGNTLTIWLWGGFSINDPTLTRFFALHFILPFAIISLSSIHIILLHNEGSNNPLGTNSDIDKIPLHPYHSYKDMLMITIMITMLFITMSFTPNLLNDPENFSKANPLLTPQHIKPEWYFLFAYGILRSIPNKLGGTMALIMSVAILITVPFTHTSHTRSMLFRPLTQILFWTLISTFIIITWTATKPVESPFISISQMTSIIYFSFFIINPLLGWIENKIMMP.

Transmembrane regions (helical) follow at residues 25–45 (FGSM…FLAI), 69–90 (WIMQ…YIHI), 105–125 (WLSG…GYVL), and 170–190 (FFAL…IHII). Residues histidine 75 and histidine 89 each contribute to the heme b site. Heme b-binding residues include histidine 174 and histidine 188. Histidine 193 contacts a ubiquinone. The next 4 helical transmembrane spans lie at 218–238 (YKDM…MSFT), 280–300 (LGGT…PFTH), 312–332 (LTQI…WTAT), and 339–358 (FISI…IINP).

The protein belongs to the cytochrome b family. In terms of assembly, the cytochrome bc1 complex contains 3 respiratory subunits (MT-CYB, CYC1 and UQCRFS1), 2 core proteins (UQCRC1 and UQCRC2) and probably 6 low-molecular weight proteins. Heme b is required as a cofactor.

The protein resides in the mitochondrion inner membrane. Component of the ubiquinol-cytochrome c reductase complex (complex III or cytochrome b-c1 complex) that is part of the mitochondrial respiratory chain. The b-c1 complex mediates electron transfer from ubiquinol to cytochrome c. Contributes to the generation of a proton gradient across the mitochondrial membrane that is then used for ATP synthesis. The sequence is that of Cytochrome b (MT-CYB) from Bungarus fasciatus (Banded krait).